A 347-amino-acid polypeptide reads, in one-letter code: GMP reductase (347 aa).

An NADP(+)-binding site is contributed by 108–131; that stretch reads ADFEKTKQILDLNPALNFVCIDVA. Residues glycine 181 and glycine 183 each contribute to the K(+) site. Residue cysteine 186 is the Thioimidate intermediate of the active site. 216 to 239 is a binding site for NADP(+); the sequence is IVSDGGCTTPGDVAKAFGGGADFV.

It belongs to the IMPDH/GMPR family. GuaC type 1 subfamily. Homotetramer.

It catalyses the reaction IMP + NH4(+) + NADP(+) = GMP + NADPH + 2 H(+). Functionally, catalyzes the irreversible NADPH-dependent deamination of GMP to IMP. It functions in the conversion of nucleobase, nucleoside and nucleotide derivatives of G to A nucleotides, and in maintaining the intracellular balance of A and G nucleotides. The chain is GMP reductase from Escherichia coli O127:H6 (strain E2348/69 / EPEC).